A 418-amino-acid polypeptide reads, in one-letter code: Methylmalonic aciduria type A protein, mitochondrial (418 aa).

Residues 1–65 (MPMLLPHPHQ…LLSDGLKRKL (65 aa)) constitute a mitochondrion transit peptide. GTP contacts are provided by residues 150–158 (GPPGAGKST), Asp-292, and 328–330 (SAR).

This sequence belongs to the SIMIBI class G3E GTPase family. ArgK/MeaB subfamily. In terms of assembly, homodimer. Interacts with MMUT (the apoenzyme form); the interaction is GTP dependent. Widely expressed. Highest expression is observed in liver and skeletal muscle.

The protein resides in the mitochondrion. The protein localises to the cytoplasm. The catalysed reaction is GTP + H2O = GDP + phosphate + H(+). With respect to regulation, GTPase activity is stimulated by MMUT. Its function is as follows. GTPase, binds and hydrolyzes GTP. Involved in intracellular vitamin B12 metabolism, mediates the transport of cobalamin (Cbl) into mitochondria for the final steps of adenosylcobalamin (AdoCbl) synthesis. Functions as a G-protein chaperone that assists AdoCbl cofactor delivery from MMAB to the methylmalonyl-CoA mutase (MMUT). Plays a dual role as both a protectase and a reactivase for MMUT. Protects MMUT from progressive inactivation by oxidation by decreasing the rate of the formation of the oxidized inactive cofactor hydroxocobalamin (OH2Cbl). Additionally acts a reactivase by promoting the replacement of OH2Cbl by the active cofactor AdoCbl, restoring the activity of MMUT in the presence and hydrolysis of GTP. This is Methylmalonic aciduria type A protein, mitochondrial from Homo sapiens (Human).